Consider the following 462-residue polypeptide: MREPRHVPQLRASGRRFPQRGRRHRFGKRNDAMSWSDRLVSRFNGARDAGGGAAPRTAARAASGARAAAGGLASVVNGARPTRSRMLDFDYSLLWVSIALLGLGVVMVYSASIAMPDSPKYASYHDYAFLLRHCVSLVVAFVAAVIAFRVPVSTWDKYAPHLFLIALVGLVIVLIPHIGKGVNGARRWIPLGITNMQPSEIMKLAVTIYAANYTVRKQEYMQSFAKGFLPMAFAVGLVGALLLLEPDMGAFMVVAAIAMGVLFLGGVNGKLFGGLVATAVGTFTMLVWLSPWRRERIFAYLDPWDERYAQGKAYQLTHSLIAFGRGEWFGVGLGGSVEKLNYLPEAHTDFILAVIGEELGFVGVLVVILLFYWIVRRSFEIGRQALALDRTFAGLMAKGVGIWFGAQAFINMGVNLGLLPTKGLTLPLVSYGGSGILLNCISLAVLLRVDYENRVLMRGGKV.

The tract at residues 1-28 is disordered; that stretch reads MREPRHVPQLRASGRRFPQRGRRHRFGK. Over 1-92 the chain is Cytoplasmic; the sequence is MREPRHVPQL…RSRMLDFDYS (92 aa). Basic residues predominate over residues 13-27; that stretch reads SGRRFPQRGRRHRFG. The helical transmembrane segment at 93-113 threads the bilayer; the sequence is LLWVSIALLGLGVVMVYSASI. The Periplasmic segment spans residues 114-127; it reads AMPDSPKYASYHDY. Residues 128–148 form a helical membrane-spanning segment; sequence AFLLRHCVSLVVAFVAAVIAF. At 149–158 the chain is on the cytoplasmic side; sequence RVPVSTWDKY. Residues 159 to 179 form a helical membrane-spanning segment; it reads APHLFLIALVGLVIVLIPHIG. Topologically, residues 180 to 192 are periplasmic; sequence KGVNGARRWIPLG. A helical membrane pass occupies residues 193-215; sequence ITNMQPSEIMKLAVTIYAANYTV. The Cytoplasmic portion of the chain corresponds to 216–223; that stretch reads RKQEYMQS. The helical transmembrane segment at 224 to 244 threads the bilayer; sequence FAKGFLPMAFAVGLVGALLLL. Over 245–247 the chain is Periplasmic; the sequence is EPD. The chain crosses the membrane as a helical span at residues 248–268; the sequence is MGAFMVVAAIAMGVLFLGGVN. At 269 to 270 the chain is on the cytoplasmic side; it reads GK. The chain crosses the membrane as a helical span at residues 271–291; sequence LFGGLVATAVGTFTMLVWLSP. Residues 292-349 lie on the Periplasmic side of the membrane; that stretch reads WRRERIFAYLDPWDERYAQGKAYQLTHSLIAFGRGEWFGVGLGGSVEKLNYLPEAHTD. A helical membrane pass occupies residues 350–370; it reads FILAVIGEELGFVGVLVVILL. At 371-398 the chain is on the cytoplasmic side; sequence FYWIVRRSFEIGRQALALDRTFAGLMAK. Residues 399 to 419 form a helical membrane-spanning segment; sequence GVGIWFGAQAFINMGVNLGLL. Residues 420 to 425 lie on the Periplasmic side of the membrane; that stretch reads PTKGLT. A helical transmembrane segment spans residues 426-446; sequence LPLVSYGGSGILLNCISLAVL. Topologically, residues 447 to 462 are cytoplasmic; sequence LRVDYENRVLMRGGKV.

The protein belongs to the SEDS family. FtsW subfamily.

The protein resides in the cell inner membrane. It carries out the reaction [GlcNAc-(1-&gt;4)-Mur2Ac(oyl-L-Ala-gamma-D-Glu-L-Lys-D-Ala-D-Ala)](n)-di-trans,octa-cis-undecaprenyl diphosphate + beta-D-GlcNAc-(1-&gt;4)-Mur2Ac(oyl-L-Ala-gamma-D-Glu-L-Lys-D-Ala-D-Ala)-di-trans,octa-cis-undecaprenyl diphosphate = [GlcNAc-(1-&gt;4)-Mur2Ac(oyl-L-Ala-gamma-D-Glu-L-Lys-D-Ala-D-Ala)](n+1)-di-trans,octa-cis-undecaprenyl diphosphate + di-trans,octa-cis-undecaprenyl diphosphate + H(+). It functions in the pathway cell wall biogenesis; peptidoglycan biosynthesis. Functionally, peptidoglycan polymerase that is essential for cell division. This is Probable peptidoglycan glycosyltransferase FtsW from Burkholderia thailandensis (strain ATCC 700388 / DSM 13276 / CCUG 48851 / CIP 106301 / E264).